Consider the following 316-residue polypeptide: Epoxide hydrolase 3 (316 aa).

In terms of domain architecture, AB hydrolase-1 spans 25–302 (PVVLLLHGFP…ACHFINQERP (278 aa)). The Nucleophile role is filled by D101. An epoxide is bound at residue Y150. Y230 functions as the Proton donor in the catalytic mechanism. H295 acts as the Proton acceptor in catalysis.

The protein belongs to the AB hydrolase superfamily. Epoxide hydrolase family. As to quaternary structure, homodimer. As to expression, highly expressed in young fruits 15 days after anthesis (15-DAA).

It catalyses the reaction an epoxide + H2O = an ethanediol. The enzyme catalyses (24S)-24,25-epoxycucurbitadienol + H2O = (24R)-24,25-dihydroxycucurbitadienol. It participates in secondary metabolite biosynthesis; terpenoid biosynthesis. Its function is as follows. Epoxide hydrolase involved in the biosynthesis of cucurbitacin and mogroside tetracyclic triterpene natural products (e.g. siamenoside I and mogrosides IV, V and VI). Cucurbitacins have cytotoxic properties and exhibit deterrent taste as a defense barrier against herbivores. Mogrosides are nonsugar highly oxygenated compounds used as high-intensity zero-calorie sweeteners; they also possess pharmacological properties such as regulating immunity, lowering blood sugar and lipid levels, protecting the liver, and acting as antioxidants and antitumor agents. Catalyzes the hydrolysis of aromatic epoxide-containing substrates, such as the conversion of 24,25-epoxycucurbitadienol to 24,25-dihydroxycucurbitadienol. The sequence is that of Epoxide hydrolase 3 from Siraitia grosvenorii (Monk's fruit).